We begin with the raw amino-acid sequence, 132 residues long: Small ribosomal subunit protein uS8 (132 aa).

Belongs to the universal ribosomal protein uS8 family. In terms of assembly, part of the 30S ribosomal subunit. Contacts proteins S5 and S12.

Functionally, one of the primary rRNA binding proteins, it binds directly to 16S rRNA central domain where it helps coordinate assembly of the platform of the 30S subunit. The sequence is that of Small ribosomal subunit protein uS8 from Sinorhizobium medicae (strain WSM419) (Ensifer medicae).